The sequence spans 323 residues: Nucleotide-binding protein ZMO1325 (323 aa).

An ATP-binding site is contributed by 25–32 (GLSGAGKS). 78 to 81 (DSRT) is a binding site for GTP.

Belongs to the RapZ-like family.

Its function is as follows. Displays ATPase and GTPase activities. The polypeptide is Nucleotide-binding protein ZMO1325 (Zymomonas mobilis subsp. mobilis (strain ATCC 31821 / ZM4 / CP4)).